The chain runs to 97 residues: MAKTASPGATPPDNGTEPLPDNYEMALAELETLVARMEGGALSLEDSLAAYRRGANLVAFCQQQLEKVEQQVRVLDGATLKPLSSGTAATDGEDDDL.

Positions 1-22 (MAKTASPGATPPDNGTEPLPDN) are disordered.

It belongs to the XseB family. As to quaternary structure, heterooligomer composed of large and small subunits.

It is found in the cytoplasm. It catalyses the reaction Exonucleolytic cleavage in either 5'- to 3'- or 3'- to 5'-direction to yield nucleoside 5'-phosphates.. Functionally, bidirectionally degrades single-stranded DNA into large acid-insoluble oligonucleotides, which are then degraded further into small acid-soluble oligonucleotides. This is Exodeoxyribonuclease 7 small subunit from Burkholderia ambifaria (strain MC40-6).